We begin with the raw amino-acid sequence, 471 residues long: ATP synthase subunit beta (471 aa).

156–163 (GGAGVGKT) serves as a coordination point for ATP.

Belongs to the ATPase alpha/beta chains family. F-type ATPases have 2 components, CF(1) - the catalytic core - and CF(0) - the membrane proton channel. CF(1) has five subunits: alpha(3), beta(3), gamma(1), delta(1), epsilon(1). CF(0) has three main subunits: a(1), b(2) and c(9-12). The alpha and beta chains form an alternating ring which encloses part of the gamma chain. CF(1) is attached to CF(0) by a central stalk formed by the gamma and epsilon chains, while a peripheral stalk is formed by the delta and b chains.

It localises to the cell membrane. It carries out the reaction ATP + H2O + 4 H(+)(in) = ADP + phosphate + 5 H(+)(out). Functionally, produces ATP from ADP in the presence of a proton gradient across the membrane. The catalytic sites are hosted primarily by the beta subunits. This chain is ATP synthase subunit beta, found in Mycoplasmoides gallisepticum (strain R(low / passage 15 / clone 2)) (Mycoplasma gallisepticum).